A 1373-amino-acid chain; its full sequence is DNA-directed RNA polymerase subunit beta (1373 aa).

The protein belongs to the RNA polymerase beta chain family. In terms of assembly, the RNAP catalytic core consists of 2 alpha, 1 beta, 1 beta' and 1 omega subunit. When a sigma factor is associated with the core the holoenzyme is formed, which can initiate transcription.

The catalysed reaction is RNA(n) + a ribonucleoside 5'-triphosphate = RNA(n+1) + diphosphate. In terms of biological role, DNA-dependent RNA polymerase catalyzes the transcription of DNA into RNA using the four ribonucleoside triphosphates as substrates. This is DNA-directed RNA polymerase subunit beta from Rickettsia canadensis (strain McKiel).